A 710-amino-acid chain; its full sequence is Adenylosuccinate synthetase (710 aa).

2 disordered regions span residues 1-57 and 82-112; these read MPVR…NHAK and MDDE…SAQC. Residues 11–25 show a composition bias toward low complexity; the sequence is NNSSSGVSNALSSSS. Positions 32 to 43 are enriched in polar residues; the sequence is SPSSRENSTPLS. Residues 180–186 and 210–212 contribute to the GTP site; these read GDEGKGK and GHT. Catalysis depends on aspartate 181, which acts as the Proton acceptor. Aspartate 181 and glycine 210 together coordinate Mg(2+). Residues 181–184, 208–211, threonine 295, lysine 309, glutamine 421, threonine 437, and lysine 567 each bind IMP; these read DEGK and NAGH. Catalysis depends on histidine 211, which acts as the Proton donor. Substrate is bound at residue 563 to 569; the sequence is AVTKKPR. GTP is bound by residues arginine 569 and 697-699; that span reads GNG.

Belongs to the adenylosuccinate synthetase family. Homodimer. Requires Mg(2+) as cofactor.

The protein localises to the cytoplasm. It carries out the reaction IMP + L-aspartate + GTP = N(6)-(1,2-dicarboxyethyl)-AMP + GDP + phosphate + 2 H(+). Its pathway is purine metabolism; AMP biosynthesis via de novo pathway; AMP from IMP: step 1/2. In terms of biological role, plays an important role in the salvage pathway for purine nucleotide biosynthesis. Catalyzes the first committed step in the biosynthesis of AMP from IMP. The protein is Adenylosuccinate synthetase of Leishmania braziliensis.